A 640-amino-acid chain; its full sequence is LRR receptor kinase SERL2 (640 aa).

Positions 1–22 (MEPPFFLLLLLLVVSSSSPSAA) are cleaved as a signal peptide. Over 23 to 241 (LLSAKGVNNE…AARDRGHKFA (219 aa)) the chain is Extracellular. N-linked (GlcNAc...) asparagine glycosylation is found at Asn-94 and Asn-107. 4 LRR repeats span residues 95–119 (LTNLETVLLQNNNITGPIPAEIGRL), 120–143 (ENLKTLDLSSNSFYGEIPSSVGHL), 145–167 (SLQYLRLNNNTLSGPFPSASANL), and 168–191 (SHLVFLDLSYNNLSGPIPESLART). Residues Asn-153, Asn-166, Asn-179, and Asn-222 are each glycosylated (N-linked (GlcNAc...) asparagine). A helical membrane pass occupies residues 242-262 (VAFGSTAGCMGLLLLAAGFLF). Residues 263 to 640 (WWRHRRNRQI…VQAVELSGPR (378 aa)) lie on the Cytoplasmic side of the membrane. The Protein kinase domain maps to 304-583 (FSGKNILGKG…EGDGLADRWE (280 aa)). ATP-binding positions include 310-318 (LGKGGFGNV) and Lys-332. Asp-427 functions as the Proton acceptor in the catalytic mechanism.

It belongs to the protein kinase superfamily. Ser/Thr protein kinase family. As to quaternary structure, interacts with MSBP1.

The protein localises to the cell membrane. It catalyses the reaction L-seryl-[protein] + ATP = O-phospho-L-seryl-[protein] + ADP + H(+). It carries out the reaction L-threonyl-[protein] + ATP = O-phospho-L-threonyl-[protein] + ADP + H(+). LRR receptor kinase that may be involved in defense response. The polypeptide is LRR receptor kinase SERL2 (Oryza sativa subsp. japonica (Rice)).